The sequence spans 488 residues: Envelope glycoprotein gp62 (488 aa).

A signal peptide spans 1-20 (MGKFLATLILFFQFCPLILS). Residues 21 to 442 (DYSPSCCTLT…LGLSQWAREA (422 aa)) lie on the Extracellular side of the membrane. N-linked (GlcNAc...) asparagine; by host glycosylation is found at Asn140 and Asn222. The CXXC signature appears at 225–228 (CIVC). 3 disulfides stabilise this stretch: Cys225–Cys228, Cys225–Cys401, and Cys393–Cys400. 2 N-linked (GlcNAc...) asparagine; by host glycosylation sites follow: Asn244 and Asn272. Residues 313-333 (AVPVAVWLVSALAMGAGMAGG) are fusion peptide. Coiled coils occupy residues 341-387 (ASGR…LLFW) and 397-429 (QEQC…GWGL). The immunosuppression stretch occupies residues 376–392 (AQNRRGLDLLFWEQGGL). The CX6CC signature appears at 393–401 (CKALQEQCC). A glycan (N-linked (GlcNAc...) asparagine; by host) is linked at Asn404. The chain crosses the membrane as a helical span at residues 443–463 (LQTGITLVALLLLVILAGPCI). Cys462 carries S-palmitoyl cysteine; by host lipidation. Topologically, residues 464–488 (LRQLRHLPSRVRYPHYSLINPESSL) are cytoplasmic.

In terms of assembly, the mature envelope protein (Env) consists of a trimer of SU-TM heterodimers attached by a labile interchain disulfide bond. Post-translationally, specific enzymatic cleavages in vivo yield mature proteins. Envelope glycoproteins are synthesized as an inactive precursor that is N-glycosylated and processed likely by host cell furin or by a furin-like protease in the Golgi to yield the mature SU and TM proteins. The cleavage site between SU and TM requires the minimal sequence [KR]-X-[KR]-R. The CXXC motif is highly conserved across a broad range of retroviral envelope proteins. It is thought to participate in the formation of a labile disulfide bond possibly with the CX6CC motif present in the transmembrane protein. Isomerization of the intersubunit disulfide bond to an SU intrachain disulfide bond is thought to occur upon receptor recognition in order to allow membrane fusion. In terms of processing, the transmembrane protein is palmitoylated.

It localises to the virion membrane. The protein localises to the host cell membrane. Its function is as follows. The surface protein (SU) attaches the virus to the host cell by binding to its receptor. This interaction triggers the refolding of the transmembrane protein (TM) and is thought to activate its fusogenic potential by unmasking its fusion peptide. Fusion occurs at the host cell plasma membrane. Functionally, the transmembrane protein (TM) acts as a class I viral fusion protein. Under the current model, the protein has at least 3 conformational states: pre-fusion native state, pre-hairpin intermediate state, and post-fusion hairpin state. During viral and target cell membrane fusion, the coiled coil regions (heptad repeats) assume a trimer-of-hairpins structure, positioning the fusion peptide in close proximity to the C-terminal region of the ectodomain. The formation of this structure appears to drive apposition and subsequent fusion of viral and target cell membranes. Membranes fusion leads to delivery of the nucleocapsid into the cytoplasm. The sequence is that of Envelope glycoprotein gp62 (env) from Human T-cell leukemia virus 1 (isolate Zaire EL subtype B) (HTLV-1).